Reading from the N-terminus, the 149-residue chain is Nucleoside diphosphate kinase (149 aa).

The ATP site is built by Lys-9, Phe-57, Arg-85, Thr-91, Arg-102, and Asn-112. His-115 functions as the Pros-phosphohistidine intermediate in the catalytic mechanism.

It belongs to the NDK family. As to quaternary structure, homotetramer. The cofactor is Mg(2+).

The protein localises to the cytoplasm. It catalyses the reaction a 2'-deoxyribonucleoside 5'-diphosphate + ATP = a 2'-deoxyribonucleoside 5'-triphosphate + ADP. It carries out the reaction a ribonucleoside 5'-diphosphate + ATP = a ribonucleoside 5'-triphosphate + ADP. Major role in the synthesis of nucleoside triphosphates other than ATP. The ATP gamma phosphate is transferred to the NDP beta phosphate via a ping-pong mechanism, using a phosphorylated active-site intermediate. This is Nucleoside diphosphate kinase from Crocosphaera subtropica (strain ATCC 51142 / BH68) (Cyanothece sp. (strain ATCC 51142)).